Reading from the N-terminus, the 602-residue chain is Aspartate--tRNA(Asp/Asn) ligase (602 aa).

Residue Glu-176 participates in L-aspartate binding. The aspartate stretch occupies residues 200–203; that stretch reads QQFK. Arg-222 and His-452 together coordinate L-aspartate. 222–224 provides a ligand contact to ATP; the sequence is RDE. Glu-490 is a binding site for ATP. Arg-497 provides a ligand contact to L-aspartate. An ATP-binding site is contributed by 542–545; sequence GIDR.

This sequence belongs to the class-II aminoacyl-tRNA synthetase family. Type 1 subfamily. As to quaternary structure, homodimer.

The protein localises to the cytoplasm. It carries out the reaction tRNA(Asx) + L-aspartate + ATP = L-aspartyl-tRNA(Asx) + AMP + diphosphate. In terms of biological role, aspartyl-tRNA synthetase with relaxed tRNA specificity since it is able to aspartylate not only its cognate tRNA(Asp) but also tRNA(Asn). Reaction proceeds in two steps: L-aspartate is first activated by ATP to form Asp-AMP and then transferred to the acceptor end of tRNA(Asp/Asn). In Rickettsia africae (strain ESF-5), this protein is Aspartate--tRNA(Asp/Asn) ligase.